Consider the following 682-residue polypeptide: Methionine synthase reductase (682 aa).

The Flavodoxin-like domain maps to 4 to 147 (FLIAFGSQTG…EVEPWIEKFF (144 aa)). 93–124 (LLGLGDSNYSSYQTIPRKIDKQLTALGANRLF) contacts FMN. Positions 271–516 (TKPFEVLVVS…GKEPARFRLP (246 aa)) constitute an FAD-binding FR-type domain. Lysine 293 contributes to the NADP(+) binding site. FAD-binding positions include 455-458 (RPYS) and 488-491 (GLAT). NADP(+)-binding positions include 607–609 (RVQ) and aspartate 643. An FAD-binding site is contributed by tryptophan 681.

The cofactor is FAD. Requires FMN as cofactor.

The catalysed reaction is 2 methylcob(III)alamin-[methionine synthase] + 2 S-adenosyl-L-homocysteine + NADP(+) + H(+) = 2 cob(II)alamin-[methionine synthase] + 2 S-adenosyl-L-methionine + NADPH. In terms of biological role, involved in the reductive regeneration of cob(I)alamin cofactor required for the maintenance of methionine synthase in a functional state. The chain is Methionine synthase reductase from Caenorhabditis elegans.